A 435-amino-acid polypeptide reads, in one-letter code: Adenylosuccinate lyase (435 aa).

Residues 4–5 (RY), 73–75 (RHD), and 99–100 (TS) each bind N(6)-(1,2-dicarboxyethyl)-AMP. Residue histidine 147 is the Proton donor/acceptor of the active site. Glutamine 218 is a N(6)-(1,2-dicarboxyethyl)-AMP binding site. Serine 268 serves as the catalytic Proton donor/acceptor. N(6)-(1,2-dicarboxyethyl)-AMP contacts are provided by residues serine 269, 274 to 276 (KKN), asparagine 282, and 313 to 317 (SAERV).

It belongs to the lyase 1 family. Adenylosuccinate lyase subfamily. Homotetramer. Residues from neighboring subunits contribute catalytic and substrate-binding residues to each active site.

It catalyses the reaction N(6)-(1,2-dicarboxyethyl)-AMP = fumarate + AMP. It carries out the reaction (2S)-2-[5-amino-1-(5-phospho-beta-D-ribosyl)imidazole-4-carboxamido]succinate = 5-amino-1-(5-phospho-beta-D-ribosyl)imidazole-4-carboxamide + fumarate. It participates in purine metabolism; AMP biosynthesis via de novo pathway; AMP from IMP: step 2/2. Its pathway is purine metabolism; IMP biosynthesis via de novo pathway; 5-amino-1-(5-phospho-D-ribosyl)imidazole-4-carboxamide from 5-amino-1-(5-phospho-D-ribosyl)imidazole-4-carboxylate: step 2/2. Functionally, catalyzes two reactions in de novo purine nucleotide biosynthesis. Catalyzes the breakdown of 5-aminoimidazole- (N-succinylocarboxamide) ribotide (SAICAR or 2-[5-amino-1-(5-phospho-beta-D-ribosyl)imidazole-4-carboxamido]succinate) to 5-aminoimidazole-4-carboxamide ribotide (AICAR or 5-amino-1-(5-phospho-beta-D-ribosyl)imidazole-4-carboxamide) and fumarate, and of adenylosuccinate (ADS or N(6)-(1,2-dicarboxyethyl)-AMP) to adenosine monophosphate (AMP) and fumarate. This Deinococcus radiodurans (strain ATCC 13939 / DSM 20539 / JCM 16871 / CCUG 27074 / LMG 4051 / NBRC 15346 / NCIMB 9279 / VKM B-1422 / R1) protein is Adenylosuccinate lyase (purB).